A 602-amino-acid chain; its full sequence is Prostaglandin G/H synthase 1 (602 aa).

The first 26 residues, Met1–Leu26, serve as a signal peptide directing secretion. An EGF-like domain is found at Pro34–Thr72. 4 disulfides stabilise this stretch: Cys38–Cys49, Cys39–Cys161, Cys43–Cys59, and Cys61–Cys71. N-linked (GlcNAc...) asparagine glycans are attached at residues Asn70, Asn106, and Asn146. His209 functions as the Proton acceptor in the catalytic mechanism. Tyr387 acts as the For cyclooxygenase activity in catalysis. A heme b-binding site is contributed by His390. An N-linked (GlcNAc...) asparagine glycan is attached at Asn412. The cysteines at positions 571 and 577 are disulfide-linked.

The protein belongs to the prostaglandin G/H synthase family. As to quaternary structure, homodimer. Requires heme b as cofactor.

It localises to the microsome membrane. Its subcellular location is the endoplasmic reticulum membrane. It carries out the reaction (5Z,8Z,11Z,14Z)-eicosatetraenoate + AH2 + 2 O2 = prostaglandin H2 + A + H2O. It catalyses the reaction (5Z,8Z,11Z,14Z)-eicosatetraenoate + 2 O2 = prostaglandin G2. The enzyme catalyses prostaglandin G2 + AH2 = prostaglandin H2 + A + H2O. The catalysed reaction is (9Z,12Z)-octadecadienoate + AH2 + O2 = (9R)-hydroxy-(10E,12Z)-octadecadienoate + A + H2O. It carries out the reaction (9Z,12Z)-octadecadienoate + AH2 + O2 = (9S)-hydroxy-(10E,12Z)-octadecadienoate + A + H2O. It catalyses the reaction (9Z,12Z)-octadecadienoate + AH2 + O2 = (13S)-hydroxy-(9Z,11E)-octadecadienoate + A + H2O. The enzyme catalyses (9Z,12Z)-octadecadienoate + AH2 + O2 = (13R)-hydroxy-(9Z,11E)-octadecadienoate + A + H2O. Its pathway is lipid metabolism; prostaglandin biosynthesis. The cyclooxygenase activity is inhibited by nonsteroidal anti-inflammatory drugs (NSAIDs) including ibuprofen, flurbiprofen, ketoprofen, naproxen, flurbiprofen, anirolac, fenclofenac and diclofenac. Functionally, dual cyclooxygenase and peroxidase that plays an important role in the biosynthesis pathway of prostanoids, a class of C20 oxylipins mainly derived from arachidonate ((5Z,8Z,11Z,14Z)-eicosatetraenoate, AA, C20:4(n-6)), with a particular role in the inflammatory response. The cyclooxygenase activity oxygenates AA to the hydroperoxy endoperoxide prostaglandin G2 (PGG2), and the peroxidase activity reduces PGG2 to the hydroxy endoperoxide prostaglandin H2 (PGH2), the precursor of all 2-series prostaglandins and thromboxanes. This complex transformation is initiated by abstraction of hydrogen at carbon 13 (with S-stereochemistry), followed by insertion of molecular O2 to form the endoperoxide bridge between carbon 9 and 11 that defines prostaglandins. The insertion of a second molecule of O2 (bis-oxygenase activity) yields a hydroperoxy group in PGG2 that is then reduced to PGH2 by two electrons. Involved in the constitutive production of prostanoids in particular in the stomach and platelets. In gastric epithelial cells, it is a key step in the generation of prostaglandins, such as prostaglandin E2 (PGE2), which plays an important role in cytoprotection. In platelets, it is involved in the generation of thromboxane A2 (TXA2), which promotes platelet activation and aggregation, vasoconstriction and proliferation of vascular smooth muscle cells. Can also use linoleate (LA, (9Z,12Z)-octadecadienoate, C18:2(n-6)) as substrate and produce hydroxyoctadecadienoates (HODEs) in a regio- and stereospecific manner, being (9R)-HODE ((9R)-hydroxy-(10E,12Z)-octadecadienoate) and (13S)-HODE ((13S)-hydroxy-(9Z,11E)-octadecadienoate) its major products. In Rattus norvegicus (Rat), this protein is Prostaglandin G/H synthase 1.